Consider the following 258-residue polypeptide: Global transcriptional regulator CodY (258 aa).

The segment at 1 to 156 (MSSLLEKTRQ…SATIIGLEIL (156 aa)) is GAF domain. A DNA-binding region (H-T-H motif) is located at residues 204–223 (ASKIADKVGITRSVIVNALR).

Belongs to the CodY family.

It localises to the cytoplasm. DNA-binding global transcriptional regulator which is involved in the adaptive response to starvation and acts by directly or indirectly controlling the expression of numerous genes in response to nutrient availability. During rapid exponential growth, CodY is highly active and represses genes whose products allow adaptation to nutrient depletion. The chain is Global transcriptional regulator CodY from Clostridium tetani (strain Massachusetts / E88).